A 347-amino-acid polypeptide reads, in one-letter code: RNA 3'-terminal phosphate cyclase (347 aa).

Residues glutamine 109 and 290-294 (YLADQ) contribute to the ATP site. The Tele-AMP-histidine intermediate role is filled by histidine 315.

It belongs to the RNA 3'-terminal cyclase family. Type 1 subfamily.

It localises to the cytoplasm. It carries out the reaction a 3'-end 3'-phospho-ribonucleotide-RNA + ATP = a 3'-end 2',3'-cyclophospho-ribonucleotide-RNA + AMP + diphosphate. Catalyzes the conversion of 3'-phosphate to a 2',3'-cyclic phosphodiester at the end of RNA. The mechanism of action of the enzyme occurs in 3 steps: (A) adenylation of the enzyme by ATP; (B) transfer of adenylate to an RNA-N3'P to produce RNA-N3'PP5'A; (C) and attack of the adjacent 2'-hydroxyl on the 3'-phosphorus in the diester linkage to produce the cyclic end product. The biological role of this enzyme is unknown but it is likely to function in some aspects of cellular RNA processing. The polypeptide is RNA 3'-terminal phosphate cyclase (Ralstonia nicotianae (strain ATCC BAA-1114 / GMI1000) (Ralstonia solanacearum)).